The primary structure comprises 430 residues: uncharacterized protein (430 aa).

2 helical membrane-spanning segments follow: residues 20 to 40 (YLCL…GIMP) and 405 to 425 (YIWW…LLVI).

The protein localises to the membrane. This is an uncharacterized protein from Schizosaccharomyces pombe (strain 972 / ATCC 24843) (Fission yeast).